We begin with the raw amino-acid sequence, 553 residues long: MFCIQCEQTLEAPKKKGCAYATGMCGKTAEISDLQDVLVYILQGVSYWADLAHKFDIIDDEINHWAPRAFFATLTNVNFDRERILALANLAENYKTRLKQAVIAATTLAQQPLPTLPTVAEFTLPNTIDAILTLAPQVAVNRGYETINEDVIGLRLLCLYGLKGAAAYMEHARVLGQTNNAIYAQYHHIMSWLGTDPTDLNALLECSMEIGLMNYKVMEMLDLGETNTFGHPLPSQVNVKPIQGKCILVSGHDLHDLEKILQQTEGKHINVYTNGEMLPAHSYPELKKYPHLVGNYGSAWQNQQLEFANFPGAIVMTSNCLINPNVGKYADRIFTRSIVAWPGVAHIEGDDFSQVIDCALALDGFQHTEIEHMITIGFGRNALMNAAPAVIDQVKQGNINHFFLVGGCDGAKEERSYFTDFAAQVPQDSLILTLACGKYRFNKNNFGDINGIPRLLDVGQCNDAYSAIQLALALANEFDCSINELPLTLVLSWFEQKAIVILLTLFALGVKGIYTGPTAPAFLTDNLLAIIAEKFDMRSISTPEADLNTILSA.

The [2Fe-2S] cluster site is built by Cys-3, Cys-6, Cys-18, and Cys-25. 8 residues coordinate hybrid [4Fe-2O-2S] cluster: His-252, Glu-276, Cys-320, Cys-408, Cys-436, Cys-461, Glu-495, and Lys-497. At Cys-408 the chain carries Cysteine persulfide.

Belongs to the HCP family. Requires [2Fe-2S] cluster as cofactor. The cofactor is hybrid [4Fe-2O-2S] cluster.

The protein resides in the cytoplasm. The enzyme catalyses A + NH4(+) + H2O = hydroxylamine + AH2 + H(+). In terms of biological role, catalyzes the reduction of hydroxylamine to form NH(3) and H(2)O. The polypeptide is Hydroxylamine reductase (Photobacterium phosphoreum).